Consider the following 615-residue polypeptide: Semenogelin-1 (615 aa).

Positions 1–23 are cleaved as a signal peptide; it reads MKPIIFLVLSLLLILEKQAAVMG. Gln-24 carries the post-translational modification Pyrrolidone carboxylic acid. Disordered regions lie at residues 24-118, 133-160, and 172-585; these read QKGG…EHGK, GHAP…SQDS, and GKEQ…HRSY. Residues 34 to 46 show a composition bias toward polar residues; it reads SESSQFPHGQKGQ. Residues 50–80 show a composition bias toward basic and acidic residues; that stretch reads ARKDKQHAESKRSVSIEHTYHVDIPDHDQTR. A compositionally biased stretch (polar residues) spans 81-91; that stretch reads TSKQYDLNAQN. The segment covering 107-118 has biased composition (basic and acidic residues); sequence FNHKQEGREHGK. Polar residues-rich tracts occupy residues 138–160, 177–196, and 209–224; these read GTQN…SQDS, SVSG…SPVL, and TQNS…NVNE. 3 N-linked (GlcNAc...) asparagine glycosylation sites follow: Asn-148, Asn-184, and Asn-223. The span at 241–253 shows a compositional bias: basic and acidic residues; that stretch reads QEDRLQHGSKDVF. Residues 254 to 265 are compositionally biased toward polar residues; that stretch reads SKNQNQTRNPNQ. Residues Asn-258 and Asn-275 are each glycosylated (N-linked (GlcNAc...) asparagine). The span at 283–300 shows a compositional bias: basic and acidic residues; it reads TEERRPNHGEKGIQKDAS. Asn-306 is a glycosylation site (N-linked (GlcNAc...) asparagine). Residues 308 to 317 show a composition bias toward basic and acidic residues; it reads TEDKMHDKSQ. A glycan (N-linked (GlcNAc...) asparagine) is linked at Asn-332. Basic and acidic residues predominate over residues 341-358; the sequence is TEERRPNHGEKGIQKDAS. Asn-364 carries an N-linked (GlcNAc...) asparagine glycan. Basic and acidic residues predominate over residues 366 to 375; that stretch reads TEDKMHDKSQ. Asn-390 is a glycosylation site (N-linked (GlcNAc...) asparagine). Residues 399-416 are compositionally biased toward basic and acidic residues; sequence TEERRPNHGEKGIQKDAS. An N-linked (GlcNAc...) asparagine glycan is attached at Asn-422. Over residues 424–433 the composition is skewed to basic and acidic residues; it reads TEDKMHDKSQ. Residue Asn-448 is glycosylated (N-linked (GlcNAc...) asparagine). A compositionally biased stretch (basic and acidic residues) spans 457–474; the sequence is TEERRPNHGEKGIQKDAS. N-linked (GlcNAc...) asparagine glycosylation is present at Asn-480. Residues 481 to 491 show a composition bias toward basic and acidic residues; the sequence is KTEDKMHDKSQ. Residue Asn-506 is glycosylated (N-linked (GlcNAc...) asparagine). The span at 515 to 532 shows a compositional bias: basic and acidic residues; the sequence is TEERRPNHGEKGIQKDAS. Asn-538 carries an N-linked (GlcNAc...) asparagine glycan. Over residues 539–549 the composition is skewed to basic and acidic residues; that stretch reads KTEDEKHDKSQ. The segment covering 550 to 563 has biased composition (polar residues); that stretch reads KQVTTPSQDQQSGQ.

Belongs to the semenogelin family. As to quaternary structure, occurs in disulfide-linked complexes. Transglutaminase substrate. Post-translationally, rapidly cleaved after ejaculation by KLK3/PSA, resulting in liquefaction of the semen coagulum and the progressive release of motile spermatozoa.

The protein resides in the secreted. Its function is as follows. Predominant protein in semen. It participates in the formation of a gel matrix entrapping the accessory gland secretions and ejaculated spermatozoa. Fragments of semenogelin and/or fragments of the related proteins may contribute to the activation of progressive sperm movements as the gel-forming proteins are fragmented by KLK3/PSA. In Saguinus oedipus (Cotton-top tamarin), this protein is Semenogelin-1 (SEMG1).